The following is a 206-amino-acid chain: Protein GrpE (206 aa).

Belongs to the GrpE family. As to quaternary structure, homodimer.

It is found in the cytoplasm. Functionally, participates actively in the response to hyperosmotic and heat shock by preventing the aggregation of stress-denatured proteins, in association with DnaK and GrpE. It is the nucleotide exchange factor for DnaK and may function as a thermosensor. Unfolded proteins bind initially to DnaJ; upon interaction with the DnaJ-bound protein, DnaK hydrolyzes its bound ATP, resulting in the formation of a stable complex. GrpE releases ADP from DnaK; ATP binding to DnaK triggers the release of the substrate protein, thus completing the reaction cycle. Several rounds of ATP-dependent interactions between DnaJ, DnaK and GrpE are required for fully efficient folding. This Psychromonas ingrahamii (strain DSM 17664 / CCUG 51855 / 37) protein is Protein GrpE.